The primary structure comprises 289 residues: Extracellular ribonuclease (289 aa).

A signal peptide spans 1–24 (MTKKLWFLPIVCLFFILGWTAPSA). The propeptide occupies 25–51 (SAGAPADTNLYSRLAVSTAGGTTLFPQ). The segment at 177-197 (FDNGGSEYPKAPGNYYDGDSW) is disordered.

The protein resides in the secreted. Functionally, mg(2+)-activated ribonuclease which hydrolyzes RNA apparently nonspecifically into oligonucleotides with 5'-terminal phosphate. The chain is Extracellular ribonuclease (bsn) from Bacillus amyloliquefaciens (Bacillus velezensis).